A 230-amino-acid polypeptide reads, in one-letter code: Acyl-coenzyme A thioesterase THEM4 (230 aa).

The transit peptide at 1-27 directs the protein to the mitochondrion; it reads MLRNCAMRLRTLGATPARRPGAARRLF. 2 positions are modified to phosphoserine: serine 28 and serine 29. N6-succinyllysine occurs at positions 46 and 57. Residue lysine 65 is modified to N6-acetyllysine. N6-succinyllysine is present on residues lysine 89 and lysine 98. Aspartate 152 (proton donor/acceptor) is an active-site residue. Residues lysine 175 and 196 to 197 each bind substrate; that span reads RK. N6-succinyllysine is present on lysine 197.

It belongs to the THEM4/THEM5 thioesterase family. As to quaternary structure, homodimer and homotetramer. Interacts with AKT1 in the cytosol. In terms of assembly, (Microbial infection) Interacts with V-AKT from AKT8 murine leukemia virus. Phosphorylated.

The protein resides in the cell membrane. The protein localises to the cell projection. It is found in the ruffle membrane. Its subcellular location is the cytoplasm. It localises to the mitochondrion. The protein resides in the mitochondrion inner membrane. The protein localises to the mitochondrion intermembrane space. The catalysed reaction is hexadecanoyl-CoA + H2O = hexadecanoate + CoA + H(+). It catalyses the reaction octanoyl-CoA + H2O = octanoate + CoA + H(+). The enzyme catalyses decanoyl-CoA + H2O = decanoate + CoA + H(+). It carries out the reaction dodecanoyl-CoA + H2O = dodecanoate + CoA + H(+). The catalysed reaction is tetradecanoyl-CoA + H2O = tetradecanoate + CoA + H(+). It catalyses the reaction (9Z)-octadecenoyl-CoA + H2O = (9Z)-octadecenoate + CoA + H(+). The enzyme catalyses (5Z,8Z,11Z,14Z)-eicosatetraenoyl-CoA + H2O = (5Z,8Z,11Z,14Z)-eicosatetraenoate + CoA + H(+). In terms of biological role, has acyl-CoA thioesterase activity towards medium and long-chain (C14 to C18) fatty acyl-CoA substrates, and probably plays a role in mitochondrial fatty acid metabolism. Plays a role in the apoptotic process, possibly via its regulation of AKT1 activity. In Mus musculus (Mouse), this protein is Acyl-coenzyme A thioesterase THEM4 (Them4).